The following is a 762-amino-acid chain: Palmitoyltransferase ZDHHC8 (762 aa).

Residues 1–13 are Cytoplasmic-facing; that stretch reads MPRSPGTRLKPAK. A helical transmembrane segment spans residues 14–34; it reads YIPVATAAALLVGSSTLFFVF. Residues 35 to 52 lie on the Lumenal side of the membrane; that stretch reads TCPWLTRAVSPAIPVYNG. Residues 53–73 form a helical membrane-spanning segment; it reads ILFLFVLANFSMATFMDPGVF. At 74–148 the chain is on the cytoplasmic side; it reads PRADEDEDKE…NCIGRRNYRY (75 aa). The 51-residue stretch at 104 to 154 folds into the DHHC domain; it reads KWCATCHFYRPPRCSHCSVCDNCVEDFDHHCPWVNNCIGRRNYRYFFLFLL. The active-site S-palmitoyl cysteine intermediate is the C134. The chain crosses the membrane as a helical span at residues 149 to 169; the sequence is FFLFLLSLSAHMVGVVAFGLL. Residues 170–190 lie on the Lumenal side of the membrane; the sequence is YVLNHSEGLGAAHTTITMAVM. A helical membrane pass occupies residues 191 to 211; that stretch reads CVAGLFFIPVIGLTGFHVVLV. Topologically, residues 212–762 are cytoplasmic; the sequence is TRGRTTNEQV…VGGTTYEISV (551 aa). 4 disordered regions span residues 289 to 350, 362 to 423, 436 to 537, and 551 to 574; these read GLKA…PPTP, GPKT…TTDA, ASRR…SPVR, and ERKD…GDSG. Residue S335 is modified to Phosphoserine. A compositionally biased stretch (pro residues) spans 408–417; it reads LRPPYPPSPP. Omega-N-methylarginine is present on R439. Positions 471 to 485 are enriched in polar residues; it reads RNGSLSYDSLLNPGS. Residues 511–521 are compositionally biased toward pro residues; the sequence is PSDPPRPPPRS. Basic and acidic residues predominate over residues 551 to 562; sequence ERKDREERERLL. Phosphoserine is present on residues S603 and S624. A compositionally biased stretch (low complexity) spans 626–644; sequence SSLSSSMSRAPRTSSSSLQ. Disordered stretches follow at residues 626–684 and 707–744; these read SSLS…SYTG and DHPQ…PARH. Phosphoserine occurs at positions 672, 679, 722, and 740.

Belongs to the DHHC palmitoyltransferase family. ERF2/ZDHHC9 subfamily. Expressed in brain cortex and hippocampus.

It is found in the golgi apparatus membrane. It localises to the mitochondrion membrane. The enzyme catalyses L-cysteinyl-[protein] + hexadecanoyl-CoA = S-hexadecanoyl-L-cysteinyl-[protein] + CoA. Palmitoyltransferase that catalyzes the addition of palmitate onto various protein substrates and therefore functions in several unrelated biological processes. Through the palmitoylation of ABCA1 regulates the localization of the transporter to the plasma membrane and thereby regulates its function in cholesterol and phospholipid efflux. Could also pamitoylate the D(2) dopamine receptor DRD2 and regulate its stability and localization to the plasma membrane. Could also play a role in glutamatergic transmission. In Mus musculus (Mouse), this protein is Palmitoyltransferase ZDHHC8.